The following is a 200-amino-acid chain: Serine/threonine-protein kinase mos (200 aa).

The 199-residue stretch at 2–200 (LCLLQPLGSG…ELLKGERVTA (199 aa)) folds into the Protein kinase domain. Residues 8-16 (LGSGGFGSV) and K29 contribute to the ATP site. Catalysis depends on D143, which acts as the Proton acceptor.

The protein belongs to the protein kinase superfamily. Ser/Thr protein kinase family.

It catalyses the reaction L-seryl-[protein] + ATP = O-phospho-L-seryl-[protein] + ADP + H(+). The enzyme catalyses L-threonyl-[protein] + ATP = O-phospho-L-threonyl-[protein] + ADP + H(+). The protein is Serine/threonine-protein kinase mos (MOS) of Vultur gryphus (Andean condor).